A 312-amino-acid chain; its full sequence is Ribosomal protein L11 methyltransferase (312 aa).

Residues T160, G181, D203, and N246 each coordinate S-adenosyl-L-methionine.

The protein belongs to the methyltransferase superfamily. PrmA family.

It localises to the cytoplasm. It carries out the reaction L-lysyl-[protein] + 3 S-adenosyl-L-methionine = N(6),N(6),N(6)-trimethyl-L-lysyl-[protein] + 3 S-adenosyl-L-homocysteine + 3 H(+). Functionally, methylates ribosomal protein L11. This chain is Ribosomal protein L11 methyltransferase, found in Staphylococcus aureus (strain USA300).